The chain runs to 122 residues: Large ribosomal subunit protein uL14 (122 aa).

This sequence belongs to the universal ribosomal protein uL14 family. In terms of assembly, part of the 50S ribosomal subunit. Forms a cluster with proteins L3 and L19. In the 70S ribosome, L14 and L19 interact and together make contacts with the 16S rRNA in bridges B5 and B8.

In terms of biological role, binds to 23S rRNA. Forms part of two intersubunit bridges in the 70S ribosome. In Acetivibrio thermocellus (strain ATCC 27405 / DSM 1237 / JCM 9322 / NBRC 103400 / NCIMB 10682 / NRRL B-4536 / VPI 7372) (Clostridium thermocellum), this protein is Large ribosomal subunit protein uL14.